The sequence spans 339 residues: Protein RecA (339 aa).

ATP is bound at residue 66–73 (GPESSGKT).

The protein belongs to the RecA family.

The protein localises to the cytoplasm. Can catalyze the hydrolysis of ATP in the presence of single-stranded DNA, the ATP-dependent uptake of single-stranded DNA by duplex DNA, and the ATP-dependent hybridization of homologous single-stranded DNAs. It interacts with LexA causing its activation and leading to its autocatalytic cleavage. The protein is Protein RecA of Geobacter metallireducens (strain ATCC 53774 / DSM 7210 / GS-15).